The primary structure comprises 631 residues: Sperm-associated antigen 16 protein (631 aa).

A coiled-coil region spans residues 152–267; it reads DVYTQIMLLE…LQETLKKLQR (116 aa). Residues 266-332 are disordered; the sequence is QRGHSYHGPQ…QPNPNLNVSK (67 aa). 2 stretches are compositionally biased toward basic and acidic residues: residues 277–287 and 295–304; these read KVDHSREKENA and GLREAREQNK. WD repeat units lie at residues 350-389, 392-431, 434-473, 476-515, 518-557, 560-600, and 601-630; these read LHEL…VLLT, GHTD…CILT, GHSR…CRCT, GHTD…CEQS, GHMH…PIVS, IGPS…HKLM, and GHEN…VRTW.

In terms of assembly, interacts with SPAG6 and STK36. Post-translationally, phosphorylated by TSSK2. Isoform 1 is detected in testis. Isoform 4 is detected in testis and brain, and at lower levels in kidney, heart, pancreas, thyroid, ovary, adrenal gland, spinal cord, trachea and liver.

The protein localises to the cytoplasm. It localises to the cytoskeleton. Its subcellular location is the flagellum axoneme. The protein resides in the cilium axoneme. It is found in the cell projection. The protein localises to the cilium. It localises to the flagellum. Functionally, necessary for sperm flagellar function. Plays a role in motile ciliogenesis. May help to recruit STK36 to the cilium or apical surface of the cell to initiate subsequent steps of construction of the central pair apparatus of motile cilia. The polypeptide is Sperm-associated antigen 16 protein (SPAG16) (Homo sapiens (Human)).